We begin with the raw amino-acid sequence, 249 residues long: 5'-nucleotidase SurE (249 aa).

Residues Asp8, Asp9, Ser39, and Asn91 each contribute to the a divalent metal cation site.

Belongs to the SurE nucleotidase family. A divalent metal cation is required as a cofactor.

It is found in the cytoplasm. The catalysed reaction is a ribonucleoside 5'-phosphate + H2O = a ribonucleoside + phosphate. Nucleotidase that shows phosphatase activity on nucleoside 5'-monophosphates. This is 5'-nucleotidase SurE from Haemophilus influenzae (strain 86-028NP).